A 282-amino-acid chain; its full sequence is MTAPRDPDALIRRAGRPNPDFDQHFLIDDRVLDRIPTYADGFDRGHVLEIGAGTGALTDRLLSVADRVTAVERDESYASFLREEFADAIAAGDLDVVAGDALAVDLPAFTCAVSNLPYGVASEVTFRLLPAGKPMVLMYQLEFAERMAADPGTSEYGRLSVATQHYADVSIVETVPAAAFDPQPRVESAVVRVTPRDPDYVVADEAFFLSFVKALFTQRRKTTRNAIRNTAHISGLDDPDAVVAAVDDDVLGTRPGSLSPATFAALANVAWGVETAPGPDPQ.

Residues His24, Leu26, Gly51, Glu72, Asp100, and Asn115 each coordinate S-adenosyl-L-methionine.

It belongs to the class I-like SAM-binding methyltransferase superfamily. rRNA adenine N(6)-methyltransferase family. RsmA subfamily.

It localises to the cytoplasm. Functionally, specifically dimethylates two adjacent adenosines in the loop of a conserved hairpin near the 3'-end of 16S rRNA in the 30S particle. May play a critical role in biogenesis of 30S subunits. In Halobacterium salinarum (strain ATCC 29341 / DSM 671 / R1), this protein is Probable ribosomal RNA small subunit methyltransferase A.